A 359-amino-acid polypeptide reads, in one-letter code: 3-dehydroquinate synthase (359 aa).

NAD(+) contacts are provided by residues 105 to 109, 129 to 130, lysine 142, lysine 151, and 169 to 172; these read GVVGD, TT, and TIKT. Zn(2+) is bound by residues glutamate 184, histidine 247, and histidine 263.

It belongs to the sugar phosphate cyclases superfamily. Dehydroquinate synthase family. The cofactor is Co(2+). Zn(2+) is required as a cofactor. NAD(+) serves as cofactor.

The protein localises to the cytoplasm. It catalyses the reaction 7-phospho-2-dehydro-3-deoxy-D-arabino-heptonate = 3-dehydroquinate + phosphate. It participates in metabolic intermediate biosynthesis; chorismate biosynthesis; chorismate from D-erythrose 4-phosphate and phosphoenolpyruvate: step 2/7. Catalyzes the conversion of 3-deoxy-D-arabino-heptulosonate 7-phosphate (DAHP) to dehydroquinate (DHQ). The polypeptide is 3-dehydroquinate synthase (Ruminiclostridium cellulolyticum (strain ATCC 35319 / DSM 5812 / JCM 6584 / H10) (Clostridium cellulolyticum)).